The following is a 152-amino-acid chain: Large ribosomal subunit protein uL22 (152 aa).

A compositionally biased stretch (low complexity) spans 124-145 (APKKAAAKKAAPAKETTPAATE). The segment at 124–152 (APKKAAAKKAAPAKETTPAATESKTEGAE) is disordered.

It belongs to the universal ribosomal protein uL22 family. In terms of assembly, part of the 50S ribosomal subunit.

Functionally, this protein binds specifically to 23S rRNA; its binding is stimulated by other ribosomal proteins, e.g. L4, L17, and L20. It is important during the early stages of 50S assembly. It makes multiple contacts with different domains of the 23S rRNA in the assembled 50S subunit and ribosome. The globular domain of the protein is located near the polypeptide exit tunnel on the outside of the subunit, while an extended beta-hairpin is found that lines the wall of the exit tunnel in the center of the 70S ribosome. The chain is Large ribosomal subunit protein uL22 from Salinispora tropica (strain ATCC BAA-916 / DSM 44818 / JCM 13857 / NBRC 105044 / CNB-440).